The primary structure comprises 101 residues: Small ribosomal subunit protein uS14 (101 aa).

It belongs to the universal ribosomal protein uS14 family. As to quaternary structure, part of the 30S ribosomal subunit. Contacts proteins S3 and S10.

In terms of biological role, binds 16S rRNA, required for the assembly of 30S particles and may also be responsible for determining the conformation of the 16S rRNA at the A site. The sequence is that of Small ribosomal subunit protein uS14 from Shewanella sediminis (strain HAW-EB3).